The chain runs to 197 residues: Large ribosomal subunit protein bL25 (197 aa).

This sequence belongs to the bacterial ribosomal protein bL25 family. CTC subfamily. In terms of assembly, part of the 50S ribosomal subunit; part of the 5S rRNA/L5/L18/L25 subcomplex. Contacts the 5S rRNA. Binds to the 5S rRNA independently of L5 and L18.

Its function is as follows. This is one of the proteins that binds to the 5S RNA in the ribosome where it forms part of the central protuberance. This chain is Large ribosomal subunit protein bL25, found in Pseudomonas putida (strain ATCC 700007 / DSM 6899 / JCM 31910 / BCRC 17059 / LMG 24140 / F1).